A 463-amino-acid polypeptide reads, in one-letter code: MRTVTAPPRPGPGLRVRLPQVAPSVREFLATEAGGAVLLLLAAVAALLWANSPWSGSYDRFWSTTAELRLGSAGFDMTLHHWVNDGAMAIFFAVVGLEISREFTTGELRDRRTIAVPALGAIGGLILPAAIYFVVNRSGPESNGWGIPMSTDTAFVIGILALFGPRCPDRLRLFLLTLAIVDDIGAITVVGIFYTDHLNPVGLAVAGATVLAILGLRWLRVWQLPPYILASLVLWGAIHVSGVHATLAGVLVGLLVPAVPPRPDQVEEVPVYVRALQEDSNATRVGLAVAAAKATVPANDRLQRVLHPISAFVVVPVFGLANAGVHLDGSALRTAATSSVTLGVAAALIAGNACGISVAGVAAIRTGLGQLPGRVRYGHLLGAATLAGIGFTISLFITELAFTDEALQEQAKIGILAGSLVAALAGTVILRVLGERMPLCSPMTDEPVPRLPPRPWRAPVPAK.

11 consecutive transmembrane segments (helical) span residues 28–48, 79–99, 114–134, 144–164, 173–193, 196–216, 232–252, 305–325, 344–364, 377–397, and 413–433; these read FLAT…AALL, LHHW…GLEI, IAVP…IYFV, GWGI…ALFG, LFLL…VGIF, DHLN…ILGL, LVLW…GVLV, VLHP…NAGV, VAAA…VAAI, YGHL…SLFI, and IGIL…LRVL. The interval 444-463 is disordered; the sequence is TDEPVPRLPPRPWRAPVPAK. Pro residues predominate over residues 449–463; the sequence is PRLPPRPWRAPVPAK.

It belongs to the NhaA Na(+)/H(+) (TC 2.A.33) antiporter family.

It localises to the cell membrane. The enzyme catalyses Na(+)(in) + 2 H(+)(out) = Na(+)(out) + 2 H(+)(in). Its function is as follows. Na(+)/H(+) antiporter that extrudes sodium in exchange for external protons. This chain is Na(+)/H(+) antiporter NhaA 3, found in Frankia alni (strain DSM 45986 / CECT 9034 / ACN14a).